A 317-amino-acid polypeptide reads, in one-letter code: Transaldolase (317 aa).

The Schiff-base intermediate with substrate role is filled by lysine 132.

It belongs to the transaldolase family. Type 1 subfamily. Homodimer.

It localises to the cytoplasm. It carries out the reaction D-sedoheptulose 7-phosphate + D-glyceraldehyde 3-phosphate = D-erythrose 4-phosphate + beta-D-fructose 6-phosphate. It functions in the pathway carbohydrate degradation; pentose phosphate pathway; D-glyceraldehyde 3-phosphate and beta-D-fructose 6-phosphate from D-ribose 5-phosphate and D-xylulose 5-phosphate (non-oxidative stage): step 2/3. Its function is as follows. Transaldolase is important for the balance of metabolites in the pentose-phosphate pathway. This is Transaldolase from Yersinia pseudotuberculosis serotype O:1b (strain IP 31758).